The chain runs to 270 residues: Phosphatidate cytidylyltransferase (270 aa).

The next 7 membrane-spanning stretches (helical) occupy residues 19–39 (LWLT…IGLA), 53–73 (TAFS…LLIL), 76–96 (GALL…VTQW), 101–121 (GWPA…SLLR), 126–146 (FGFT…ITAY), 183–203 (LVAS…ALLL), and 248–268 (ALLY…AIFF).

The protein belongs to the CDS family.

Its subcellular location is the cell inner membrane. It carries out the reaction a 1,2-diacyl-sn-glycero-3-phosphate + CTP + H(+) = a CDP-1,2-diacyl-sn-glycerol + diphosphate. Its pathway is phospholipid metabolism; CDP-diacylglycerol biosynthesis; CDP-diacylglycerol from sn-glycerol 3-phosphate: step 3/3. The chain is Phosphatidate cytidylyltransferase (cdsA) from Brucella abortus (strain 2308).